The following is a 233-amino-acid chain: Phosphoribosylformylglycinamidine synthase subunit PurQ (233 aa).

The Glutamine amidotransferase type-1 domain maps to 3 to 233 (SAVLVFPGIN…GLAQHLAKAA (231 aa)). Cysteine 87 serves as the catalytic Nucleophile. Catalysis depends on residues histidine 204 and glutamate 206.

In terms of assembly, part of the FGAM synthase complex composed of 1 PurL, 1 PurQ and 2 PurS subunits.

Its subcellular location is the cytoplasm. The catalysed reaction is N(2)-formyl-N(1)-(5-phospho-beta-D-ribosyl)glycinamide + L-glutamine + ATP + H2O = 2-formamido-N(1)-(5-O-phospho-beta-D-ribosyl)acetamidine + L-glutamate + ADP + phosphate + H(+). It catalyses the reaction L-glutamine + H2O = L-glutamate + NH4(+). It participates in purine metabolism; IMP biosynthesis via de novo pathway; 5-amino-1-(5-phospho-D-ribosyl)imidazole from N(2)-formyl-N(1)-(5-phospho-D-ribosyl)glycinamide: step 1/2. Part of the phosphoribosylformylglycinamidine synthase complex involved in the purines biosynthetic pathway. Catalyzes the ATP-dependent conversion of formylglycinamide ribonucleotide (FGAR) and glutamine to yield formylglycinamidine ribonucleotide (FGAM) and glutamate. The FGAM synthase complex is composed of three subunits. PurQ produces an ammonia molecule by converting glutamine to glutamate. PurL transfers the ammonia molecule to FGAR to form FGAM in an ATP-dependent manner. PurS interacts with PurQ and PurL and is thought to assist in the transfer of the ammonia molecule from PurQ to PurL. The chain is Phosphoribosylformylglycinamidine synthase subunit PurQ from Rhodopseudomonas palustris (strain ATCC BAA-98 / CGA009).